Consider the following 257-residue polypeptide: GTP cyclohydrolase FolE2 (257 aa).

This sequence belongs to the GTP cyclohydrolase IV family.

It carries out the reaction GTP + H2O = 7,8-dihydroneopterin 3'-triphosphate + formate + H(+). Its pathway is cofactor biosynthesis; 7,8-dihydroneopterin triphosphate biosynthesis; 7,8-dihydroneopterin triphosphate from GTP: step 1/1. In terms of biological role, converts GTP to 7,8-dihydroneopterin triphosphate. In Dictyoglomus turgidum (strain DSM 6724 / Z-1310), this protein is GTP cyclohydrolase FolE2.